The chain runs to 364 residues: Aminomethyltransferase (364 aa).

The protein belongs to the GcvT family. In terms of assembly, the glycine cleavage system is composed of four proteins: P, T, L and H.

It catalyses the reaction N(6)-[(R)-S(8)-aminomethyldihydrolipoyl]-L-lysyl-[protein] + (6S)-5,6,7,8-tetrahydrofolate = N(6)-[(R)-dihydrolipoyl]-L-lysyl-[protein] + (6R)-5,10-methylene-5,6,7,8-tetrahydrofolate + NH4(+). Its function is as follows. The glycine cleavage system catalyzes the degradation of glycine. This Shewanella baltica (strain OS195) protein is Aminomethyltransferase.